The sequence spans 131 residues: D-ribose pyranase (131 aa).

His-20 functions as the Proton donor in the catalytic mechanism. Substrate-binding positions include Asp-28, His-98, and 120–122; that span reads YSN.

Belongs to the RbsD / FucU family. RbsD subfamily. Homodecamer.

It localises to the cytoplasm. It carries out the reaction beta-D-ribopyranose = beta-D-ribofuranose. The protein operates within carbohydrate metabolism; D-ribose degradation; D-ribose 5-phosphate from beta-D-ribopyranose: step 1/2. Catalyzes the interconversion of beta-pyran and beta-furan forms of D-ribose. In Limosilactobacillus reuteri (strain DSM 20016) (Lactobacillus reuteri), this protein is D-ribose pyranase.